Here is a 740-residue protein sequence, read N- to C-terminus: NAD(P)H-quinone oxidoreductase subunit 5, chloroplastic (740 aa).

16 helical membrane passes run 9–29 (WIIPFIPLPVPMLIGAGLILF), 40–60 (WAFQSVLLLSIVMVFSIYLSI), 89–109 (IDPLTSIMSILITTVGIMVLI), 125–145 (FAYMSFFSTSMLGLVTSSNLI), 147–167 (IYIFWELVGLCSYLLIGFWFT), 185–205 (GDFGLLLGILGFYWITGSFEF), 219–239 (NEVDFLFVTLCAVLLFAGAVA), 258–278 (TPISALIHAATMVAAGIFLVA), 286–306 (VIPYIMYLISVIGIITVLLGA), 327–347 (LGYMMLALGMGSYRSALFHLI), 354–374 (ALLFLGSGSIIHSMETIVGYS), 396–416 (ITFLLGTLSLCGIPPLACFWS), 425–445 (WLYSPIFAIIAWATAGLTAFY), 543–563 (LFPIFVLGLFTLFVGSLGIPF), 602–622 (VLSVSIAYFGIFIASFLYKPI), and 717–737 (SYLFLYLAYVLVFLLVYYLLF).

The protein belongs to the complex I subunit 5 family. As to quaternary structure, NDH is composed of at least 16 different subunits, 5 of which are encoded in the nucleus.

The protein localises to the plastid. Its subcellular location is the chloroplast thylakoid membrane. The enzyme catalyses a plastoquinone + NADH + (n+1) H(+)(in) = a plastoquinol + NAD(+) + n H(+)(out). The catalysed reaction is a plastoquinone + NADPH + (n+1) H(+)(in) = a plastoquinol + NADP(+) + n H(+)(out). Its function is as follows. NDH shuttles electrons from NAD(P)H:plastoquinone, via FMN and iron-sulfur (Fe-S) centers, to quinones in the photosynthetic chain and possibly in a chloroplast respiratory chain. The immediate electron acceptor for the enzyme in this species is believed to be plastoquinone. Couples the redox reaction to proton translocation, and thus conserves the redox energy in a proton gradient. In Nicotiana tomentosiformis (Tobacco), this protein is NAD(P)H-quinone oxidoreductase subunit 5, chloroplastic (ndhF).